Reading from the N-terminus, the 2297-residue chain is Serine/threonine-protein kinase WNK2 (2297 aa).

Basic and acidic residues predominate over residues 1–10 (MDGDGGRRDV). 2 disordered regions span residues 1 to 75 (MDGD…QRRV) and 89 to 183 (ARGR…EDDL). Omega-N-methylarginine is present on residues Arg-19 and Arg-30. Ser-45 is modified (phosphoserine). Residues 92-120 (RPAAPAPAALVAQPGAPGAPADAGPEPVG) show a composition bias toward low complexity. Positions 142-172 (GPREEAAATVRKEDEGAAEAKPEPGRTRRDE) are enriched in basic and acidic residues. A compositionally biased stretch (acidic residues) spans 173–182 (PEEEEDDEDD). One can recognise a Protein kinase domain in the interval 195 to 453 (LKFDIELGRG…IKDLLSHAFF (259 aa)). ATP is bound by residues Ser-205, 275-278 (TELM), and Lys-325. Catalysis depends on Asp-342, which acts as the Proton acceptor. Ser-352 and Ser-356 each carry phosphoserine; by autocatalysis. Position 560 is a phosphoserine (Ser-560). Disordered regions lie at residues 579–630 (AQAG…DSQS), 699–751 (FPDP…PVVP), 917–1022 (PQMA…PGSQ), 1117–1185 (PVQE…ERAS), 1262–1297 (SEDT…SQAN), 1323–1345 (APEA…ASQG), 1374–1480 (SAQS…HEAP), and 1492–1586 (PCTP…DSTI). A compositionally biased stretch (polar residues) spans 604–625 (PTSATSLASDSTFDSGQGSTVY). Pro residues-rich tracts occupy residues 709 to 740 (VLPP…PTPL) and 939 to 1007 (PPQP…PLQP). At Ser-1150 the chain carries Phosphoserine. Positions 1167-1178 (ARKHHRRSTRAR) are enriched in basic residues. Residue Ser-1262 is modified to Phosphoserine. Polar residues predominate over residues 1392–1406 (SKEQPSFLASQQLLS). Residues 1411–1426 (SNPPGAPPAPLAPSSP) are compositionally biased toward pro residues. Polar residues-rich tracts occupy residues 1439–1453 (ATST…TASQ) and 1461–1473 (QGLT…SQPL). Residues 1510 to 1520 (EPLPPPAPEPS) show a composition bias toward pro residues. Low complexity predominate over residues 1526–1544 (PQPALGQPAPLLPAAVGAV). Positions 1552–1565 (PSPPLGPTVPPQPP) are enriched in pro residues. Ser-1588 carries the post-translational modification Phosphoserine. Over residues 1621–1631 (TLEPLRGDQPR) the composition is skewed to basic and acidic residues. The segment at 1621 to 1865 (TLEPLRGDQP…PVQKQASLPV (245 aa)) is disordered. A compositionally biased stretch (polar residues) spans 1675–1688 (QGTSSSMTAESSPR). Phosphoserine is present on Ser-1685. A compositionally biased stretch (basic and acidic residues) spans 1721–1731 (ARVEPTDRDGG). Phosphoserine occurs at positions 1736, 1817, 1818, 1862, and 1889. Disordered regions lie at residues 1970 to 1990 (NVGF…SKSK) and 2011 to 2031 (TGHL…QASV). Positions 1981 to 1990 (GRRRKTSKSK) are enriched in basic residues. Position 2067 is a phosphoserine (Ser-2067). Disordered stretches follow at residues 2123–2142 (SRSS…QPAL) and 2269–2297 (CCGH…PVRS). Residues 2272–2289 (HSTQPRGGQRVGSKTASF) are compositionally biased toward polar residues.

The protein belongs to the protein kinase superfamily. Ser/Thr protein kinase family. WNK subfamily. Forms a complex with the phosphorylated form of STK39. Mg(2+) serves as cofactor. Post-translationally, autophosphorylated. Autophosphorylation at Ser-352 and Ser-356 promotes its activity. Expressed in various cancer cell lines (at protein level). Predominantly expressed in heart, brain, skeletal muscle and colon.

It is found in the cytoplasm. The protein localises to the cell membrane. The catalysed reaction is L-seryl-[protein] + ATP = O-phospho-L-seryl-[protein] + ADP + H(+). The enzyme catalyses L-threonyl-[protein] + ATP = O-phospho-L-threonyl-[protein] + ADP + H(+). Its activity is regulated as follows. Activation requires autophosphorylation of Ser-356 and, to a lower extent, Ser-352. Serine/threonine-protein kinase component of the WNK2-SPAK/OSR1 kinase cascade, which plays an important role in the regulation of electrolyte homeostasis, cell signaling, survival, and proliferation. The WNK2-SPAK/OSR1 kinase cascade is composed of WNK2, which mediates phosphorylation and activation of downstream kinases OXSR1/OSR1 and STK39/SPAK. Following activation, OXSR1/OSR1 and STK39/SPAK catalyze phosphorylation of ion cotransporters, regulating their activity. Acts as an activator and inhibitor of sodium-coupled chloride cotransporters and potassium-coupled chloride cotransporters respectively. Activates SLC12A2, SCNN1A, SCNN1B, SCNN1D and SGK1 and inhibits SLC12A5. Negatively regulates the EGF-induced activation of the ERK/MAPK-pathway and the downstream cell cycle progression. Affects MAPK3/MAPK1 activity by modulating the activity of MAP2K1 and this modulation depends on phosphorylation of MAP2K1 by PAK1. WNK2 acts by interfering with the activity of PAK1 by controlling the balance of the activity of upstream regulators of PAK1 activity, RHOA and RAC1, which display reciprocal activity. This Homo sapiens (Human) protein is Serine/threonine-protein kinase WNK2.